We begin with the raw amino-acid sequence, 431 residues long: tRNA(Ile)-lysidine synthase (431 aa).

25 to 30 (SGGPDS) contacts ATP.

The protein belongs to the tRNA(Ile)-lysidine synthase family.

It localises to the cytoplasm. The enzyme catalyses cytidine(34) in tRNA(Ile2) + L-lysine + ATP = lysidine(34) in tRNA(Ile2) + AMP + diphosphate + H(+). Its function is as follows. Ligates lysine onto the cytidine present at position 34 of the AUA codon-specific tRNA(Ile) that contains the anticodon CAU, in an ATP-dependent manner. Cytidine is converted to lysidine, thus changing the amino acid specificity of the tRNA from methionine to isoleucine. The polypeptide is tRNA(Ile)-lysidine synthase (Lactobacillus johnsonii (strain CNCM I-12250 / La1 / NCC 533)).